Consider the following 253-residue polypeptide: Tryptophan synthase alpha chain (253 aa).

Catalysis depends on proton acceptor residues glutamate 46 and aspartate 57.

The protein belongs to the TrpA family. Tetramer of two alpha and two beta chains.

It carries out the reaction (1S,2R)-1-C-(indol-3-yl)glycerol 3-phosphate + L-serine = D-glyceraldehyde 3-phosphate + L-tryptophan + H2O. It participates in amino-acid biosynthesis; L-tryptophan biosynthesis; L-tryptophan from chorismate: step 5/5. Functionally, the alpha subunit is responsible for the aldol cleavage of indoleglycerol phosphate to indole and glyceraldehyde 3-phosphate. This chain is Tryptophan synthase alpha chain, found in Dictyoglomus thermophilum (strain ATCC 35947 / DSM 3960 / H-6-12).